We begin with the raw amino-acid sequence, 405 residues long: Replication factor C large subunit (405 aa).

Glycine 47–threonine 54 provides a ligand contact to ATP.

The protein belongs to the activator 1 small subunits family. RfcL subfamily. In terms of assembly, heteromultimer composed of small subunits (RfcS) and large subunits (RfcL).

Functionally, part of the RFC clamp loader complex which loads the PCNA sliding clamp onto DNA. The protein is Replication factor C large subunit of Saccharolobus islandicus (strain M.16.27) (Sulfolobus islandicus).